A 93-amino-acid polypeptide reads, in one-letter code: MRLVANTKSAKKRILIIRKRTMRNKAIRSAVKTAIKKFEMALKVKPAEEARELLRQAVRALDKAVTKGVIHKNTASRKKSRLTRKFNSVYKAS.

The segment at 72 to 93 (KNTASRKKSRLTRKFNSVYKAS) is disordered. Residues 74 to 84 (TASRKKSRLTR) are compositionally biased toward basic residues.

It belongs to the bacterial ribosomal protein bS20 family.

In terms of biological role, binds directly to 16S ribosomal RNA. The sequence is that of Small ribosomal subunit protein bS20 from Carboxydothermus hydrogenoformans (strain ATCC BAA-161 / DSM 6008 / Z-2901).